We begin with the raw amino-acid sequence, 506 residues long: Maturase K (506 aa).

Belongs to the intron maturase 2 family. MatK subfamily.

The protein resides in the plastid. Its subcellular location is the chloroplast. Functionally, usually encoded in the trnK tRNA gene intron. Probably assists in splicing its own and other chloroplast group II introns. In Trifolium fragiferum (Strawberry clover), this protein is Maturase K.